The following is a 116-amino-acid chain: Large ribosomal subunit protein bL20c (116 aa).

This sequence belongs to the bacterial ribosomal protein bL20 family.

Its subcellular location is the plastid. It is found in the chloroplast. Binds directly to 23S ribosomal RNA and is necessary for the in vitro assembly process of the 50S ribosomal subunit. It is not involved in the protein synthesizing functions of that subunit. The polypeptide is Large ribosomal subunit protein bL20c (Rhodomonas salina (Cryptomonas salina)).